Consider the following 147-residue polypeptide: Phospholipase A2 SSD1043 (147 aa).

A signal peptide spans 1–22 (MSPKFMFFSIIAVWSCAAVTEA). A propeptide spanning residues 23–28 (LFIQHR) is cleaved from the precursor. 5 disulfide bridges follow: Cys-55–Cys-71, Cys-70–Cys-130, Cys-77–Cys-123, Cys-86–Cys-116, and Cys-109–Cys-121. Ca(2+) contacts are provided by Gly-56 and Gly-58. The active site involves His-74. Asp-75 is a binding site for Ca(2+). Asp-124 is a catalytic residue.

Requires Ca(2+) as cofactor. As to expression, expressed by the venom gland.

The protein resides in the secreted. It carries out the reaction a 1,2-diacyl-sn-glycero-3-phosphocholine + H2O = a 1-acyl-sn-glycero-3-phosphocholine + a fatty acid + H(+). Functionally, PLA2 catalyzes the calcium-dependent hydrolysis of the 2-acyl groups in 3-sn-phosphoglycerides. This is Phospholipase A2 SSD1043 from Scolopendra dehaani (Thai centipede).